A 55-amino-acid chain; its full sequence is Histone H1 (55 aa).

Residues 1 to 15 (MAEVAPAPAAAAPAK) are compositionally biased toward low complexity. Positions 1–28 (MAEVAPAPAAAAPAKAPKKKAAAKPKKA) are disordered. Residue alanine 2 is modified to N-acetylalanine. Residues 16–27 (APKKKAAAKPKK) are compositionally biased toward basic residues. Residues 28–55 (AGPSVGELIVKAVSASKERSGVSLAALK) form the H15 domain.

The protein belongs to the histone H1/H5 family.

It localises to the nucleus. Its subcellular location is the chromosome. The protein resides in the secreted. Functionally, histones H1 are necessary for the condensation of nucleosome chains into higher-order structures. Its function is as follows. SAMP H1 has antibacterial activity against Gram-negative bacteria E.coli, A.salmonicida subsp salmonicida, V.anguillarum and S.typhimurium and Gram-positive bacteria B.subtilis and L.ivanovii. The protein is Histone H1 of Salmo salar (Atlantic salmon).